Here is a 951-residue protein sequence, read N- to C-terminus: METKYNPQDIEQPLYEHWEKQGYFKPHGNTSKESFSIMIPPPNVTGSLHMGHAFQQTIMDTLIRYQRMQGKNTLWQAGTDHAGIATQMVVERKIAAEEGKTRHDYGRDAFIDKIWQWKGESGGNITNQMRRLGNSVDWERERFTMDEGLSNAVKEVFVRLYKEDLIYRGKRLVNWDPKLRTAISDLEVENRDVKGSMWHLRYPLADGVKTAEGKDYLVVATTRPETMLGDTGVAVNPEDPRYKDLIGKEVILPLIGRRIPIVGDEHADMEKGTGCVKITPAHDFNDYEVGKRHQLPMVNILTFDGDIRQSAEIFDTNGEASTACSSEIPEAFQGLERFAARKALVAAFDELGLLEEIKAHDLTVPYGDRGGVVIEPMLTDQWYVRAAVLAKPAVEAVEDGRIQFVPKQYENMYFSWMRDIQDWCISRQLWWGHRIPAWYDANGNVYVGRTEAEVRSENNLADDVVLNQDEDVLDTWFSSGLWTFSTLGWPEQTPDLKSFHPSSVMVSGFDIIFFWIARMIMLTMHFIKDEDGKPQVPFNTVYMTGLIRDEEGQKMSKSKGNVIDPLDMVDGISLEALLEKRTGNMMQPQLAEKIRKRTEKQFPNGIEPHGTDALRFTLAALASTGRDINWDMKRLEGYRNFCNKLWNASRFVLMNTEDQDCGFNGGEMELSLADRWILAEFNRTVKAYRDALDGYRFDIAANILYEFTWNQFCDWYLELTKPVMNGGSEAELRGTRHTLVTVLEALLRLAHPIIPFITETIWLRVKALKGINDDTIMLQPFPEFNAAQEDTLALNDLEWIKQAIIAVRNIRAEMNIAPGKPLEVLLRDATAEAQRRVEENLSFIQTLARLESITLLPAGDKGPVSVTKLIEGAELLIPMAGLIDKAAELDRLAKEVAKLEAEIGRIESKLSNEGFVARAPEAVVAKEREKMDGYAVAKTKLLEQQAVIAAL.

Residues 42–52 (PNVTGSLHMGH) carry the 'HIGH' region motif. Residues 554-558 (KMSKS) carry the 'KMSKS' region motif. K557 serves as a coordination point for ATP. Residues 880-914 (AGLIDKAAELDRLAKEVAKLEAEIGRIESKLSNEG) adopt a coiled-coil conformation.

Belongs to the class-I aminoacyl-tRNA synthetase family. ValS type 1 subfamily. Monomer.

The protein resides in the cytoplasm. It catalyses the reaction tRNA(Val) + L-valine + ATP = L-valyl-tRNA(Val) + AMP + diphosphate. Functionally, catalyzes the attachment of valine to tRNA(Val). As ValRS can inadvertently accommodate and process structurally similar amino acids such as threonine, to avoid such errors, it has a 'posttransfer' editing activity that hydrolyzes mischarged Thr-tRNA(Val) in a tRNA-dependent manner. This chain is Valine--tRNA ligase, found in Pectobacterium atrosepticum (strain SCRI 1043 / ATCC BAA-672) (Erwinia carotovora subsp. atroseptica).